Reading from the N-terminus, the 486-residue chain is Glycogen synthase (486 aa).

ADP-alpha-D-glucose is bound at residue Lys-20.

It belongs to the glycosyltransferase 1 family. Bacterial/plant glycogen synthase subfamily.

The enzyme catalyses [(1-&gt;4)-alpha-D-glucosyl](n) + ADP-alpha-D-glucose = [(1-&gt;4)-alpha-D-glucosyl](n+1) + ADP + H(+). It participates in glycan biosynthesis; glycogen biosynthesis. Synthesizes alpha-1,4-glucan chains using ADP-glucose. The protein is Glycogen synthase of Aeromonas hydrophila subsp. hydrophila (strain ATCC 7966 / DSM 30187 / BCRC 13018 / CCUG 14551 / JCM 1027 / KCTC 2358 / NCIMB 9240 / NCTC 8049).